Reading from the N-terminus, the 82-residue chain is uncharacterized protein (82 aa).

In terms of biological role, this protein may be involved in virus assembly. This is an uncharacterized protein from Sulfolobus spindle-shape virus 1 (SSV1).